The primary structure comprises 96 residues: Protein Vpr (96 aa).

A homooligomerization region spans residues 1–42 (MEQAPEDQGPQREPYHEWTLELLEELKNEAVRHFPRPWLHGL). Ser-79, Ser-94, and Ser-96 each carry phosphoserine; by host.

It belongs to the HIV-1 VPR protein family. Homooligomer, may form homodimer. Interacts with p6-gag region of the Pr55 Gag precursor protein through a (Leu-X-X)4 motif near the C-terminus of the P6gag protein. Interacts with host UNG. May interact with host RAD23A/HHR23A. Interacts with host VPRBP/DCAF1, leading to hijack the CUL4A-RBX1-DDB1-DCAF1/VPRBP complex, mediating ubiquitination of host proteins such as TERT and ZGPAT and arrest of the cell cycle in G2 phase. Post-translationally, phosphorylated on several residues by host. These phosphorylations regulate VPR activity for the nuclear import of the HIV-1 pre-integration complex.

The protein resides in the virion. Its subcellular location is the host nucleus. The protein localises to the host extracellular space. During virus replication, may deplete host UNG protein, and incude G2-M cell cycle arrest. Acts by targeting specific host proteins for degradation by the 26S proteasome, through association with the cellular CUL4A-DDB1 E3 ligase complex by direct interaction with host VPRPB/DCAF-1. Cell cycle arrest reportedly occurs within hours of infection and is not blocked by antiviral agents, suggesting that it is initiated by the VPR carried into the virion. Additionally, VPR induces apoptosis in a cell cycle dependent manner suggesting that these two effects are mechanistically linked. Detected in the serum and cerebrospinal fluid of AIDS patient, VPR may also induce cell death to bystander cells. Functionally, during virus entry, plays a role in the transport of the viral pre-integration (PIC) complex to the host nucleus. This function is crucial for viral infection of non-dividing macrophages. May act directly at the nuclear pore complex, by binding nucleoporins phenylalanine-glycine (FG)-repeat regions. The polypeptide is Protein Vpr (Homo sapiens (Human)).